A 438-amino-acid chain; its full sequence is Transposon Ty2-LR2 Gag polyprotein (438 aa).

Composition is skewed to polar residues over residues 1–11, 19–39, and 49–60; these read MESQQLHQNPH, ASVT…SASN, and KVNSQEETTPGT. Disordered stretches follow at residues 1–88, 364–397, and 418–438; these read MESQ…YQQH, KNVS…AKAH, and VSSQ…TERI. The tract at residues 295 to 397 is RNA-binding; sequence ENNINVSDRL…SSKPRAAKAH (103 aa). The span at 369-381 shows a compositional bias: low complexity; that stretch reads TSPNTTNTKVTTR.

In terms of assembly, homotrimer.

Its subcellular location is the cytoplasm. Capsid protein (CA) is the structural component of the virus-like particle (VLP), forming the shell that encapsulates the retrotransposons dimeric RNA genome. The particles are assembled from trimer-clustered units and there are holes in the capsid shells that allow for the diffusion of macromolecules. CA also has nucleocapsid-like chaperone activity, promoting primer tRNA(i)-Met annealing to the multipartite primer-binding site (PBS), dimerization of Ty2 RNA and initiation of reverse transcription. The chain is Transposon Ty2-LR2 Gag polyprotein (TY2A-LR2) from Saccharomyces cerevisiae (strain ATCC 204508 / S288c) (Baker's yeast).